Reading from the N-terminus, the 637-residue chain is Putative pentatricopeptide repeat-containing protein At5g65820 (637 aa).

PPR repeat units follow at residues 146-180 (SIEV…NPQL), 182-216 (EPEL…GFEP), 217-247 (DEYV…MRMR), 251-285 (NLRY…GFEP), 286-320 (DIVD…GFEP), 321-355 (NANC…ECEA), 356-390 (DVVT…GLMP), 391-425 (SELT…EYHP), 426-460 (DIGI…GLSP), 461-495 (GVDT…GLFS), 498-532 (QYGT…GACE), and 534-568 (NVLS…DFMP). Residues 616–630 (QDLTEKAKSKQDREG) show a composition bias toward basic and acidic residues. The tract at residues 616–637 (QDLTEKAKSKQDREGKKKQRSR) is disordered.

This sequence belongs to the PPR family. P subfamily.

This chain is Putative pentatricopeptide repeat-containing protein At5g65820, found in Arabidopsis thaliana (Mouse-ear cress).